The following is a 126-amino-acid chain: Holo-[acyl-carrier-protein] synthase (126 aa).

Mg(2+) contacts are provided by D9 and E58.

This sequence belongs to the P-Pant transferase superfamily. AcpS family. Mg(2+) serves as cofactor.

The protein resides in the cytoplasm. The enzyme catalyses apo-[ACP] + CoA = holo-[ACP] + adenosine 3',5'-bisphosphate + H(+). In terms of biological role, transfers the 4'-phosphopantetheine moiety from coenzyme A to a Ser of acyl-carrier-protein. The polypeptide is Holo-[acyl-carrier-protein] synthase (Edwardsiella ictaluri (strain 93-146)).